Here is a 130-residue protein sequence, read N- to C-terminus: MAKDTRGRKKTARRSVSEGVAHIHASFNNTIVTITDRQGNALAWATSGGQGFRGSRKSTPFAAQVAAEVAGKAAQETYGVKNVDVLVKGPGPGRESAVRALGALGYKINSISDVTPIPHNGCRPPKKRRV.

This sequence belongs to the universal ribosomal protein uS11 family. In terms of assembly, part of the 30S ribosomal subunit. Interacts with proteins S7 and S18. Binds to IF-3.

Its function is as follows. Located on the platform of the 30S subunit, it bridges several disparate RNA helices of the 16S rRNA. Forms part of the Shine-Dalgarno cleft in the 70S ribosome. The polypeptide is Small ribosomal subunit protein uS11 (Psychrobacter sp. (strain PRwf-1)).